We begin with the raw amino-acid sequence, 207 residues long: Putative 3-methyladenine DNA glycosylase (207 aa).

Residues 182–193 (PAPAGARAARAP) show a composition bias toward low complexity. Residues 182 to 207 (PAPAGARAARAPAPAPRPRRPRGSGP) are disordered. The segment covering 198-207 (RPRRPRGSGP) has biased composition (basic residues).

Belongs to the DNA glycosylase MPG family.

The protein is Putative 3-methyladenine DNA glycosylase of Anaeromyxobacter dehalogenans (strain 2CP-C).